The primary structure comprises 20 residues: Toxin TpF21-Cocle (20 aa).

Residues 1–20 (KDGYLVGNDGCKYSCNTYPK) form the LCN-type CS-alpha/beta domain.

It belongs to the long (4 C-C) scorpion toxin superfamily. Sodium channel inhibitor family. Beta subfamily. As to expression, expressed by the venom gland.

The protein localises to the secreted. Functionally, beta toxins bind voltage-independently at site-4 of sodium channels (Nav) and shift the voltage of activation toward more negative potentials thereby affecting sodium channel activation and promoting spontaneous and repetitive firing. This Tityus pachyurus (Colombian scorpion) protein is Toxin TpF21-Cocle.